Reading from the N-terminus, the 567-residue chain is Urease subunit alpha (567 aa).

One can recognise a Urease domain in the interval 129–567; that stretch reads GGVDTHIHFI…LPMAQRYFLF (439 aa). Ni(2+)-binding residues include His134, His136, and Lys217. Position 217 is an N6-carboxylysine (Lys217). Residue His219 coordinates substrate. 2 residues coordinate Ni(2+): His246 and His272. His320 acts as the Proton donor in catalysis. A Ni(2+)-binding site is contributed by Asp360.

The protein belongs to the metallo-dependent hydrolases superfamily. Urease alpha subunit family. As to quaternary structure, heterotrimer of UreA (gamma), UreB (beta) and UreC (alpha) subunits. Three heterotrimers associate to form the active enzyme. Ni cation serves as cofactor. Carboxylation allows a single lysine to coordinate two nickel ions.

The protein localises to the cytoplasm. It carries out the reaction urea + 2 H2O + H(+) = hydrogencarbonate + 2 NH4(+). It functions in the pathway nitrogen metabolism; urea degradation; CO(2) and NH(3) from urea (urease route): step 1/1. The polypeptide is Urease subunit alpha (Proteus hauseri).